Consider the following 167-residue polypeptide: Putative universal stress protein SSP1056 (167 aa).

Belongs to the universal stress protein A family.

The protein resides in the cytoplasm. The sequence is that of Putative universal stress protein SSP1056 from Staphylococcus saprophyticus subsp. saprophyticus (strain ATCC 15305 / DSM 20229 / NCIMB 8711 / NCTC 7292 / S-41).